Here is a 393-residue protein sequence, read N- to C-terminus: Glutamate 5-kinase 1 (393 aa).

Residue lysine 17 coordinates ATP. Substrate is bound by residues serine 57, aspartate 144, and asparagine 156. ATP is bound at residue 176–177 (SD). The PUA domain maps to 282–359 (AGSLSIDAGA…AEIAAILGYA (78 aa)).

This sequence belongs to the glutamate 5-kinase family.

It localises to the cytoplasm. The enzyme catalyses L-glutamate + ATP = L-glutamyl 5-phosphate + ADP. The protein operates within amino-acid biosynthesis; L-proline biosynthesis; L-glutamate 5-semialdehyde from L-glutamate: step 1/2. Functionally, catalyzes the transfer of a phosphate group to glutamate to form L-glutamate 5-phosphate. This is Glutamate 5-kinase 1 from Rhizobium meliloti (strain 1021) (Ensifer meliloti).